The following is a 61-amino-acid chain: Early E3 6.4 kDa protein (61 aa).

The disordered stretch occupies residues 1–25; that stretch reads MGNAGPLKLHTITKPGTIPYPPHGS.

The sequence is that of Early E3 6.4 kDa protein from Homo sapiens (Human).